Reading from the N-terminus, the 131-residue chain is uncharacterized protein (131 aa).

2 consecutive transmembrane segments (helical) span residues 52 to 72 (LIMI…FYLV) and 97 to 117 (SDII…YDVG).

It localises to the membrane. This is an uncharacterized protein from Acanthamoeba polyphaga mimivirus (APMV).